A 444-amino-acid polypeptide reads, in one-letter code: UPF0761 membrane protein RC1_0578 (444 aa).

6 helical membrane passes run 49 to 69, 103 to 123, 145 to 165, 186 to 206, 219 to 239, and 248 to 268; these read LLAL…FPAY, AAAL…LLFF, LLSF…SLSV, FMLP…MIPN, IAAA…IAAF, and ALSV…VVLF. The interval 423-444 is disordered; that stretch reads SGQPSGQVETAVRQRTGLQGRI.

Belongs to the UPF0761 family.

The protein resides in the cell inner membrane. The sequence is that of UPF0761 membrane protein RC1_0578 from Rhodospirillum centenum (strain ATCC 51521 / SW).